Reading from the N-terminus, the 377-residue chain is Erythronate-4-phosphate dehydrogenase (377 aa).

Substrate is bound by residues S45 and T67. NAD(+)-binding positions include 127–128 (QV), D147, and T176. The active site involves R209. D233 lines the NAD(+) pocket. Residue E238 is part of the active site. H255 functions as the Proton donor in the catalytic mechanism. G258 provides a ligand contact to NAD(+). Y259 serves as a coordination point for substrate.

The protein belongs to the D-isomer specific 2-hydroxyacid dehydrogenase family. PdxB subfamily. Homodimer.

The protein resides in the cytoplasm. The enzyme catalyses 4-phospho-D-erythronate + NAD(+) = (R)-3-hydroxy-2-oxo-4-phosphooxybutanoate + NADH + H(+). It participates in cofactor biosynthesis; pyridoxine 5'-phosphate biosynthesis; pyridoxine 5'-phosphate from D-erythrose 4-phosphate: step 2/5. Functionally, catalyzes the oxidation of erythronate-4-phosphate to 3-hydroxy-2-oxo-4-phosphonooxybutanoate. The polypeptide is Erythronate-4-phosphate dehydrogenase (Vibrio vulnificus (strain YJ016)).